We begin with the raw amino-acid sequence, 275 residues long: MEEKNIHMQPNINYSYRNPNMYNMNYHNPIVPPPQQQMQLFVNDWKSILSPMQTCKIKQQFDDREFVADYFMGFKLDFNNKYLILDASTELMKFTACEKSEFCYRNCLPKICIPMNMKILSYGKEISKPDILMEKDCTCTFLCFNRPTIKMYDFSNNNNKELIGTIKTPYRCCSYNFNLFDPSNNKIMYMDDTCCQMSILCPCPWGPFKYSNFFLRDANSKEKIAHLRKEVPFLKFVKRDIDNYTLDFEQVQNPEWKMMLLAFALFLDYMYYDRK.

A helical transmembrane segment spans residues 256–272; the sequence is WKMMLLAFALFLDYMYY.

This sequence belongs to the phospholipid scramblase family. As to quaternary structure, forms homooligomers in the presence of calcium. It depends on Ca(2+) as a cofactor. Requires Mg(2+) as cofactor.

The protein localises to the membrane. It is found in the cell membrane. It catalyses the reaction a 1,2-diacyl-sn-glycero-3-phosphoethanolamine(in) = a 1,2-diacyl-sn-glycero-3-phosphoethanolamine(out). In terms of biological role, catalyzes calcium-induced ATP-independent rapid bidirectional and non-specific movement of phospholipids (lipid scrambling or lipid flip-flop) between the inner and outer leaflet of the plasma membrane resulting in collapse of the phospholipid asymmetry. Preferentially, mediates calcium-dependent phosphatidylethanolamine externalization. During the liver stage, plays a role in the interaction with, and thus invasion of, host hepatocytes. Dispensable for host erythrocyte invasion and asexual parasite development. The sequence is that of Phospholipid scramblase from Plasmodium falciparum (isolate 3D7).